Consider the following 1429-residue polypeptide: Inactive rhomboid protein 1 (1429 aa).

3 disordered regions span residues 1 to 36 (MSSN…STRR), 560 to 579 (GNED…PDRP), and 740 to 766 (TSAL…QPGA). Residues 1-843 (MSSNGSDLGH…RPFFTYWINT (843 aa)) are Cytoplasmic-facing. The segment covering 22–33 (SVHSSMRGSMSS) has biased composition (low complexity). 2 stretches are compositionally biased toward polar residues: residues 564 to 573 (AGQSNGTNGN) and 740 to 763 (TSAL…SSHQ). A helical membrane pass occupies residues 844-864 (VQVVVLILSIICYGIAPIGIG). Residues 865-1099 (SEQKTGQVLV…PDQLYRLLTS (235 aa)) are Lumenal-facing. Residues 1100–1120 (LCMHAGILHLAITLIFQHLFL) traverse the membrane as a helical segment. Residues 1121–1131 (ADLERLIGTVR) are Cytoplasmic-facing. A helical transmembrane segment spans residues 1132–1152 (TAIVYIMSGFAGNLTSAILVP). Residues 1153-1156 (HRPE) lie on the Lumenal side of the membrane. A helical membrane pass occupies residues 1157 to 1177 (VGPSASLSGVVASLIALLVWM). Residues 1178–1186 (HWKYLHKPH) are Cytoplasmic-facing. A helical transmembrane segment spans residues 1187 to 1207 (IALFKLLLLCSVLVGIGTLPY). At 1208 to 1210 (QLN) the chain is on the lumenal side. A helical membrane pass occupies residues 1211-1231 (FLGLLAGVICGCLLTMSLVPF). Over 1232 to 1245 (TTFSKYGRKKKINL) the chain is Cytoplasmic. Residues 1246–1266 (IWTCVLFHVVVYTAMIVTFYI) traverse the membrane as a helical segment. The Lumenal portion of the chain corresponds to 1267-1429 (HPSEFHSISF…INNNTEFNVL (163 aa)).

Belongs to the peptidase S54 family. In terms of tissue distribution, specifically expressed in the nervous system and in brain.

It localises to the endoplasmic reticulum membrane. In terms of biological role, rhomboid protease-like protein which has no protease activity but regulates the secretion of several ligands of the epidermal growth factor receptor. Indirectly activates the epidermal growth factor receptor signaling pathway and may thereby regulate sleep, cell survival, proliferation and migration. The polypeptide is Inactive rhomboid protein 1 (rho-5) (Drosophila melanogaster (Fruit fly)).